Consider the following 402-residue polypeptide: MAAGSSAVWAAQHPACSGGKFHHLSPSHSHCRPRRALQTPPALPARRSGASPPRASLAAAAPAVAVRTASEEAVYEVVLRQAALVEAATPQRRRTRQPRWAEEEEEERVLGWGLLGDAYDRCGEVCAEYAKTFYLGTQLMTPERRKAVWAIYVWCRRTDELVDGPNASYITPTALDRWEKRLEDLFEGRPYDMYDAALSDTVSKFPVDIQPFKDMVQGMRLDLWKSRYMTFDELYLYCYYVAGTVGLMTVPVMGIAPDSKASTESVYNAALALGIANQLTNILRDVGEDARRGRIYLPLDELAQAGLTEEDIFRGKVTGKWRRFMKGQIQRARLFFDEAEKGVTHLDSASRWPVLASLWLYRQILDAIEANDYNNFTKRAYVGKAKKLLSLPLAYARAAVAP.

The transit peptide at 1–54 (MAAGSSAVWAAQHPACSGGKFHHLSPSHSHCRPRRALQTPPALPARRSGASPPR) directs the protein to the chloroplast. The span at 20–35 (KFHHLSPSHSHCRPRR) shows a compositional bias: basic residues. Positions 20–54 (KFHHLSPSHSHCRPRRALQTPPALPARRSGASPPR) are disordered. The span at 44–54 (PARRSGASPPR) shows a compositional bias: low complexity.

The protein belongs to the phytoene/squalene synthase family. Expressed in leaves and endosperm.

It localises to the plastid. The protein resides in the chloroplast. The protein localises to the plastoglobule. It catalyses the reaction 2 (2E,6E,10E)-geranylgeranyl diphosphate = 15-cis-phytoene + 2 diphosphate. Its function is as follows. Catalyzes the conversion of geranylgeranyl diphosphate to phytoene. Mediates the first committed step in carotenoid biosynthesis. The sequence is that of Phytoene synthase 2, chloroplastic from Zea mays (Maize).